A 385-amino-acid chain; its full sequence is Acetate kinase (385 aa).

N9 is a Mg(2+) binding site. Position 16 (K16) interacts with ATP. A substrate-binding site is contributed by R87. D144 acts as the Proton donor/acceptor in catalysis. Residues H202–G206 and D277–R279 each bind ATP. E373 lines the Mg(2+) pocket.

The protein belongs to the acetokinase family. Homodimer. Requires Mg(2+) as cofactor. Mn(2+) serves as cofactor.

It localises to the cytoplasm. The enzyme catalyses acetate + ATP = acetyl phosphate + ADP. Its pathway is metabolic intermediate biosynthesis; acetyl-CoA biosynthesis; acetyl-CoA from acetate: step 1/2. In terms of biological role, catalyzes the formation of acetyl phosphate from acetate and ATP. Can also catalyze the reverse reaction. The chain is Acetate kinase from Rickettsia akari (strain Hartford).